The primary structure comprises 164 residues: MKSVITTVVAAADAAGRFPSTSDLESVQGSIQRAAARLEAAEKLAANLDAVAKEAYDAAIKKYSYLNNAGEANSTDTFKAKCLRDIKHYLRLINYSLVVGGTGPLDEWGIAGQREVYRTLGLPTAPYVEALSFARNRGCSPRDLSAQALTEYNSLLDYVINSLS.

The (2R,3E)-phycoerythrobilin site is built by Cys82 and Cys139.

The protein belongs to the phycobiliprotein family. In terms of assembly, heterodimer of an alpha and a beta chain. In terms of processing, contains two covalently linked bilin chromophores.

It is found in the cellular thylakoid membrane. In terms of biological role, light-harvesting photosynthetic bile pigment-protein from the phycobiliprotein complex. The chain is C-phycoerythrin alpha chain (cpeA) from Synechocystis sp. (strain PCC 6701).